The following is a 141-amino-acid chain: Large ribosomal subunit protein uL11 (141 aa).

The protein belongs to the universal ribosomal protein uL11 family. In terms of assembly, part of the ribosomal stalk of the 50S ribosomal subunit. Interacts with L10 and the large rRNA to form the base of the stalk. L10 forms an elongated spine to which L12 dimers bind in a sequential fashion forming a multimeric L10(L12)X complex. One or more lysine residues are methylated.

Forms part of the ribosomal stalk which helps the ribosome interact with GTP-bound translation factors. The sequence is that of Large ribosomal subunit protein uL11 from Alkaliphilus metalliredigens (strain QYMF).